The sequence spans 115 residues: SPbeta prophage-derived uncharacterized protein YoqS (115 aa).

This is SPbeta prophage-derived uncharacterized protein YoqS (yoqS) from Bacillus subtilis (strain 168).